A 667-amino-acid chain; its full sequence is tRNA 5-methylaminomethyl-2-thiouridine biosynthesis bifunctional protein MnmC (667 aa).

The tract at residues 1 to 215 (MKFINGILFN…KREMIRAYFN (215 aa)) is tRNA (mnm(5)s(2)U34)-methyltransferase. The interval 240–667 (IGAGIAGIVT…LIRKLKKGLK (428 aa)) is FAD-dependent cmnm(5)s(2)U34 oxidoreductase.

The protein in the N-terminal section; belongs to the methyltransferase superfamily. tRNA (mnm(5)s(2)U34)-methyltransferase family. In the C-terminal section; belongs to the DAO family. FAD is required as a cofactor.

The protein resides in the cytoplasm. It catalyses the reaction 5-aminomethyl-2-thiouridine(34) in tRNA + S-adenosyl-L-methionine = 5-methylaminomethyl-2-thiouridine(34) in tRNA + S-adenosyl-L-homocysteine + H(+). Its function is as follows. Catalyzes the last two steps in the biosynthesis of 5-methylaminomethyl-2-thiouridine (mnm(5)s(2)U) at the wobble position (U34) in tRNA. Catalyzes the FAD-dependent demodification of cmnm(5)s(2)U34 to nm(5)s(2)U34, followed by the transfer of a methyl group from S-adenosyl-L-methionine to nm(5)s(2)U34, to form mnm(5)s(2)U34. The chain is tRNA 5-methylaminomethyl-2-thiouridine biosynthesis bifunctional protein MnmC from Campylobacter hominis (strain ATCC BAA-381 / DSM 21671 / CCUG 45161 / LMG 19568 / NCTC 13146 / CH001A).